Consider the following 160-residue polypeptide: Cyclic pyranopterin monophosphate synthase (160 aa).

Substrate contacts are provided by residues 75–77 (MCH) and 115–116 (ME). The active site involves aspartate 130.

This sequence belongs to the MoaC family. Homohexamer; trimer of dimers.

It catalyses the reaction (8S)-3',8-cyclo-7,8-dihydroguanosine 5'-triphosphate = cyclic pyranopterin phosphate + diphosphate. Its pathway is cofactor biosynthesis; molybdopterin biosynthesis. Its function is as follows. Catalyzes the conversion of (8S)-3',8-cyclo-7,8-dihydroguanosine 5'-triphosphate to cyclic pyranopterin monophosphate (cPMP). The sequence is that of Cyclic pyranopterin monophosphate synthase from Lysinibacillus sphaericus (strain C3-41).